Consider the following 382-residue polypeptide: Putative glutamate--cysteine ligase 2-1 (382 aa).

It belongs to the glutamate--cysteine ligase type 2 family. YbdK subfamily.

It carries out the reaction L-cysteine + L-glutamate + ATP = gamma-L-glutamyl-L-cysteine + ADP + phosphate + H(+). ATP-dependent carboxylate-amine ligase which exhibits weak glutamate--cysteine ligase activity. This is Putative glutamate--cysteine ligase 2-1 from Nocardioides sp. (strain ATCC BAA-499 / JS614).